A 141-amino-acid chain; its full sequence is Large ribosomal subunit protein uL11 (141 aa).

This sequence belongs to the universal ribosomal protein uL11 family. In terms of assembly, part of the ribosomal stalk of the 50S ribosomal subunit. Interacts with L10 and the large rRNA to form the base of the stalk. L10 forms an elongated spine to which L12 dimers bind in a sequential fashion forming a multimeric L10(L12)X complex. In terms of processing, one or more lysine residues are methylated.

In terms of biological role, forms part of the ribosomal stalk which helps the ribosome interact with GTP-bound translation factors. The chain is Large ribosomal subunit protein uL11 from Syntrophus aciditrophicus (strain SB).